Consider the following 135-residue polypeptide: Retinol-binding protein 1 (135 aa).

Residues 22 to 32 (RALDVNVALRK) are important for interaction with STRA6. Lysine 41, methionine 63, and glutamine 109 together coordinate all-trans-retinol.

The protein belongs to the calycin superfamily. Fatty-acid binding protein (FABP) family. As to quaternary structure, interacts (only as retinol-free apoprotein) with STRA6.

It is found in the cytoplasm. It localises to the lipid droplet. Its function is as follows. Cytoplasmic retinol-binding protein. Accepts retinol from the transport protein STRA6, and thereby contributes to retinol uptake, storage and retinoid homeostasis. The chain is Retinol-binding protein 1 (Rbp1) from Rattus norvegicus (Rat).